The primary structure comprises 169 residues: Acetolactate synthase small subunit (169 aa).

In terms of domain architecture, ACT spans 8-85; that stretch reads TLSVLVEDTP…KVVEQEADNS (78 aa).

The protein belongs to the acetolactate synthase small subunit family. As to quaternary structure, dimer of large and small chains.

The enzyme catalyses 2 pyruvate + H(+) = (2S)-2-acetolactate + CO2. It functions in the pathway amino-acid biosynthesis; L-isoleucine biosynthesis; L-isoleucine from 2-oxobutanoate: step 1/4. Its pathway is amino-acid biosynthesis; L-valine biosynthesis; L-valine from pyruvate: step 1/4. The protein is Acetolactate synthase small subunit (ilvH) of Mycobacterium leprae (strain TN).